Here is a 357-residue protein sequence, read N- to C-terminus: MTTLKNDRFLRALLREPVDTTPIWMMRQAGRYLPEYRETRSKAGDFLSLCKNTEFACEVTLQPLRRYDLDAAILFSDILTIPDALGLGLYFETGEGPKFHKTVRTEQDVANLPKLNAKADLDYVMNAVSTIRSALGGQVPLIGFSGSPWTLATYMVEGGSSKEFRFTKQMMYAQPEVLHALLDHLADSVIDYLNAQIDAGAQAIQIFDSWGGALAHREYVEFSLNYMNKIIAGLQREKDGRRIPVIVFTKGGGQWLEPMITTGADALGLDWTTPLNTARNVVSGRVALQGNLDPAVLYGSAASIEKAVKAMLDDAYANGEKTGYVANLGHGITQWVDPAQPKIFVDTVHEYSAKYLG.

Substrate contacts are provided by residues 27–31, Asp-77, Tyr-154, Ser-209, and His-330; that span reads RQAGR.

The protein belongs to the uroporphyrinogen decarboxylase family. Homodimer.

The protein localises to the cytoplasm. It catalyses the reaction uroporphyrinogen III + 4 H(+) = coproporphyrinogen III + 4 CO2. It functions in the pathway porphyrin-containing compound metabolism; protoporphyrin-IX biosynthesis; coproporphyrinogen-III from 5-aminolevulinate: step 4/4. Functionally, catalyzes the decarboxylation of four acetate groups of uroporphyrinogen-III to yield coproporphyrinogen-III. The protein is Uroporphyrinogen decarboxylase of Acinetobacter baumannii (strain SDF).